Here is a 275-residue protein sequence, read N- to C-terminus: Large ribosomal subunit protein uL2 (275 aa).

A disordered region spans residues glutamine 220 to lysine 275. A compositionally biased stretch (basic residues) spans phenylalanine 257–lysine 275.

Belongs to the universal ribosomal protein uL2 family. Part of the 50S ribosomal subunit. Forms a bridge to the 30S subunit in the 70S ribosome.

One of the primary rRNA binding proteins. Required for association of the 30S and 50S subunits to form the 70S ribosome, for tRNA binding and peptide bond formation. It has been suggested to have peptidyltransferase activity; this is somewhat controversial. Makes several contacts with the 16S rRNA in the 70S ribosome. This chain is Large ribosomal subunit protein uL2, found in Wolinella succinogenes (strain ATCC 29543 / DSM 1740 / CCUG 13145 / JCM 31913 / LMG 7466 / NCTC 11488 / FDC 602W) (Vibrio succinogenes).